Here is a 189-residue protein sequence, read N- to C-terminus: Probable DNA-directed RNA polymerase subunit delta (189 aa).

The HTH HARE-type domain occupies 14–81 (LSMIEVAHAI…GENVWALRTW (68 aa)). Acidic residues-rich tracts occupy residues 90–100 (EVDHPEDDGDE) and 118–189 (EGDD…EDEE). The segment at 90 to 189 (EVDHPEDDGD…DDLDDDEDEE (100 aa)) is disordered.

It belongs to the RpoE family. In terms of assembly, RNAP is composed of a core of 2 alpha, a beta and a beta' subunits. The core is associated with a delta subunit and one of several sigma factors.

Functionally, participates in both the initiation and recycling phases of transcription. In the presence of the delta subunit, RNAP displays an increased specificity of transcription, a decreased affinity for nucleic acids, and an increased efficiency of RNA synthesis because of enhanced recycling. The protein is Probable DNA-directed RNA polymerase subunit delta of Lactobacillus delbrueckii subsp. bulgaricus (strain ATCC BAA-365 / Lb-18).